Consider the following 788-residue polypeptide: 5-methyltetrahydropteroyltriglutamate--homocysteine methyltransferase (788 aa).

5-methyltetrahydropteroyltri-L-glutamate contacts are provided by residues 24 to 27 and lysine 140; that span reads RELK. Residues 463 to 465 and glutamate 516 contribute to the L-homocysteine site; that span reads IGS. L-methionine is bound by residues 463 to 465 and glutamate 516; that span reads IGS. Residues 547–548 and tryptophan 593 contribute to the 5-methyltetrahydropteroyltri-L-glutamate site; that span reads RC. Aspartate 631 contributes to the L-homocysteine binding site. An L-methionine-binding site is contributed by aspartate 631. 5-methyltetrahydropteroyltri-L-glutamate is bound at residue glutamate 637. Residues histidine 673, cysteine 675, and glutamate 697 each contribute to the Zn(2+) site. The active-site Proton donor is histidine 726. Cysteine 758 is a Zn(2+) binding site.

Belongs to the vitamin-B12 independent methionine synthase family. Requires Zn(2+) as cofactor.

It carries out the reaction 5-methyltetrahydropteroyltri-L-glutamate + L-homocysteine = tetrahydropteroyltri-L-glutamate + L-methionine. It participates in amino-acid biosynthesis; L-methionine biosynthesis via de novo pathway; L-methionine from L-homocysteine (MetE route): step 1/1. Its function is as follows. Catalyzes the transfer of a methyl group from 5-methyltetrahydrofolate to homocysteine resulting in methionine formation. This is 5-methyltetrahydropteroyltriglutamate--homocysteine methyltransferase from Rhodopseudomonas palustris (strain TIE-1).